The chain runs to 184 residues: GMP synthase [glutamine-hydrolyzing] subunit A (184 aa).

Residues 3 to 184 form the Glutamine amidotransferase type-1 domain; sequence PICVVNNYGQ…YENFDAICTE (182 aa). The active-site Nucleophile is cysteine 75. Residues histidine 162 and glutamate 164 contribute to the active site.

As to quaternary structure, heterodimer composed of a glutamine amidotransferase subunit (A) and a GMP-binding subunit (B).

It catalyses the reaction XMP + L-glutamine + ATP + H2O = GMP + L-glutamate + AMP + diphosphate + 2 H(+). Its pathway is purine metabolism; GMP biosynthesis; GMP from XMP (L-Gln route): step 1/1. Its function is as follows. Catalyzes the synthesis of GMP from XMP. The protein is GMP synthase [glutamine-hydrolyzing] subunit A of Methanoregula boonei (strain DSM 21154 / JCM 14090 / 6A8).